Here is a 414-residue protein sequence, read N- to C-terminus: Probable sugar-binding periplasmic protein (414 aa).

The signal sequence occupies residues 1–22 (MRKFMTTTAVAALMLAATAARA).

This sequence belongs to the bacterial solute-binding protein 1 family.

The protein localises to the periplasm. Part of a binding-protein-dependent transport system for a sugar. This is Probable sugar-binding periplasmic protein from Rhizobium meliloti (strain 1021) (Ensifer meliloti).